Here is a 168-residue protein sequence, read N- to C-terminus: MSLPNPAALISQMAADLNAHLAQRAISEPRFIGIRTGGVWVAQALLEALGSDSPLGTLDVSFYRDDFSQNGLHPQVRPSELPFEIEGQHLVLIDDVLMSGRTIRAALNELFDYGRPASVTLVCLLDLNAAELPIRPNVVGATLSLAAHERVKLSGPAPLQLELQDLAL.

A PRPP-binding motif is present at residues 90–102; the sequence is LVLIDDVLMSGRT.

This sequence belongs to the purine/pyrimidine phosphoribosyltransferase family. PyrR subfamily.

The catalysed reaction is UMP + diphosphate = 5-phospho-alpha-D-ribose 1-diphosphate + uracil. Functionally, regulates the transcription of the pyrimidine nucleotide (pyr) operon in response to exogenous pyrimidines. Its function is as follows. Also displays a weak uracil phosphoribosyltransferase activity which is not physiologically significant. In Pseudomonas fluorescens (strain ATCC BAA-477 / NRRL B-23932 / Pf-5), this protein is Bifunctional protein PyrR.